Reading from the N-terminus, the 110-residue chain is Iron-sulfur cluster assembly protein CyaY (110 aa).

Belongs to the frataxin family.

Its function is as follows. Involved in iron-sulfur (Fe-S) cluster assembly. May act as a regulator of Fe-S biogenesis. The chain is Iron-sulfur cluster assembly protein CyaY from Pseudomonas putida (strain W619).